Reading from the N-terminus, the 265-residue chain is 5'-nucleotidase SurE (265 aa).

Positions 9, 10, 40, and 96 each coordinate a divalent metal cation.

The protein belongs to the SurE nucleotidase family. A divalent metal cation is required as a cofactor.

The protein localises to the cytoplasm. The catalysed reaction is a ribonucleoside 5'-phosphate + H2O = a ribonucleoside + phosphate. Functionally, nucleotidase that shows phosphatase activity on nucleoside 5'-monophosphates. This is 5'-nucleotidase SurE from Methanothrix thermoacetophila (strain DSM 6194 / JCM 14653 / NBRC 101360 / PT) (Methanosaeta thermophila).